The following is a 426-amino-acid chain: Enolase (426 aa).

Glutamine 163 contributes to the (2R)-2-phosphoglycerate binding site. The active-site Proton donor is the glutamate 205. Positions 242, 283, and 310 each coordinate Mg(2+). (2R)-2-phosphoglycerate contacts are provided by lysine 335, arginine 364, serine 365, and lysine 386. The Proton acceptor role is filled by lysine 335.

The protein belongs to the enolase family. It depends on Mg(2+) as a cofactor.

It localises to the cytoplasm. Its subcellular location is the secreted. It is found in the cell surface. It catalyses the reaction (2R)-2-phosphoglycerate = phosphoenolpyruvate + H2O. The protein operates within carbohydrate degradation; glycolysis; pyruvate from D-glyceraldehyde 3-phosphate: step 4/5. In terms of biological role, catalyzes the reversible conversion of 2-phosphoglycerate (2-PG) into phosphoenolpyruvate (PEP). It is essential for the degradation of carbohydrates via glycolysis. The protein is Enolase of Arthrobacter sp. (strain FB24).